We begin with the raw amino-acid sequence, 337 residues long: MIDLRLPLTDIHRHLDGNIRAQSILELGRQYNIALPASDLDALRPHVQVTKNEPDLLSFLQKLDWGVAVLGSLDACRRVAYENVEDAMNAGLDYAELRFSPYYMAMNHKLPIAGVVEAVIDGITAGSRDFDTDIRLIGIMSRTFGTEACQQELDALLSQRDRIVALDLAGDELGYPGAQFTSHFQQARDAGWHITVHAGEAAGPESIWQAINHLGAERIGHGVTAIIDPRLMTHMAETGIGIESCLTSNIQTSTVETLDKHPLIHFLRYGIPATINTDDPAVQGIEIRHEYEVAAPLAGLTAVETRKAQENGLNIAFISEQEKQQLREKVLRKRASA.

Residues His-12 and His-14 each contribute to the Zn(2+) site. Residues His-14, Asp-16, and Gly-170 each coordinate substrate. His-197 serves as a coordination point for Zn(2+). Glu-200 serves as the catalytic Proton donor. Residue Asp-278 participates in Zn(2+) binding. Asp-279 provides a ligand contact to substrate.

Belongs to the metallo-dependent hydrolases superfamily. Adenosine and AMP deaminases family. Adenosine deaminase subfamily. It depends on Zn(2+) as a cofactor.

The enzyme catalyses adenosine + H2O + H(+) = inosine + NH4(+). It catalyses the reaction 2'-deoxyadenosine + H2O + H(+) = 2'-deoxyinosine + NH4(+). Its function is as follows. Catalyzes the hydrolytic deamination of adenosine and 2-deoxyadenosine. The protein is Adenosine deaminase of Pectobacterium atrosepticum (strain SCRI 1043 / ATCC BAA-672) (Erwinia carotovora subsp. atroseptica).